We begin with the raw amino-acid sequence, 131 residues long: uncharacterized protein (131 aa).

The disordered stretch occupies residues 60–100; sequence GRHTLSQVPNKGHEKASAVQLPEKQGTDQSRRGPTSAVTKA. The segment covering 91-100 has biased composition (polar residues); that stretch reads RGPTSAVTKA.

This is an uncharacterized protein from Homo sapiens (Human).